A 306-amino-acid polypeptide reads, in one-letter code: Glycine--tRNA ligase alpha subunit (306 aa).

This sequence belongs to the class-II aminoacyl-tRNA synthetase family. In terms of assembly, tetramer of two alpha and two beta subunits.

It localises to the cytoplasm. The enzyme catalyses tRNA(Gly) + glycine + ATP = glycyl-tRNA(Gly) + AMP + diphosphate. The sequence is that of Glycine--tRNA ligase alpha subunit from Aliivibrio fischeri (strain ATCC 700601 / ES114) (Vibrio fischeri).